A 254-amino-acid chain; its full sequence is Alcohol dehydrogenase (254 aa).

Residue 10–33 (FVAGLGGIGLDTSREIVKSGPKNL) coordinates NAD(+). Serine 138 contributes to the substrate binding site. Tyrosine 151 acts as the Proton acceptor in catalysis.

This sequence belongs to the short-chain dehydrogenases/reductases (SDR) family. Homodimer.

The enzyme catalyses a primary alcohol + NAD(+) = an aldehyde + NADH + H(+). It catalyses the reaction a secondary alcohol + NAD(+) = a ketone + NADH + H(+). This Drosophila heteroneura (Fruit fly) protein is Alcohol dehydrogenase (Adh).